A 122-amino-acid chain; its full sequence is Small ribosomal subunit protein uS13 (122 aa).

Residues 95–122 form a disordered region; the sequence is GLPVRGQRTHTNARTRKGPAKPIAGKKK.

It belongs to the universal ribosomal protein uS13 family. Part of the 30S ribosomal subunit. Forms a loose heterodimer with protein S19. Forms two bridges to the 50S subunit in the 70S ribosome.

In terms of biological role, located at the top of the head of the 30S subunit, it contacts several helices of the 16S rRNA. In the 70S ribosome it contacts the 23S rRNA (bridge B1a) and protein L5 of the 50S subunit (bridge B1b), connecting the 2 subunits; these bridges are implicated in subunit movement. Contacts the tRNAs in the A and P-sites. In Caulobacter vibrioides (strain ATCC 19089 / CIP 103742 / CB 15) (Caulobacter crescentus), this protein is Small ribosomal subunit protein uS13.